Reading from the N-terminus, the 287-residue chain is UTP--glucose-1-phosphate uridylyltransferase 1 (287 aa).

It belongs to the UDPGP type 2 family.

The enzyme catalyses alpha-D-glucose 1-phosphate + UTP + H(+) = UDP-alpha-D-glucose + diphosphate. Its pathway is glycolipid metabolism; diglucosyl-diacylglycerol biosynthesis. Its function is as follows. Catalyzes the formation of UDP-glucose from glucose-1-phosphate and UTP. This is an intermediate step in the biosynthesis of diglucosyl-diacylglycerol (Glc2-DAG), i.e. a glycolipid found in the membrane, which is also used as a membrane anchor for lipoteichoic acid (LTA). The protein is UTP--glucose-1-phosphate uridylyltransferase 1 (gtaB1) of Staphylococcus saprophyticus subsp. saprophyticus (strain ATCC 15305 / DSM 20229 / NCIMB 8711 / NCTC 7292 / S-41).